A 49-amino-acid polypeptide reads, in one-letter code: Small, acid-soluble spore protein O (49 aa).

The disordered stretch occupies residues 1 to 49 (MGKRKANHTISGMNAASAQGQGTGYNEEFANEPLTPAERQNNKKRKKNQ). Over residues 8–20 (HTISGMNAASAQG) the composition is skewed to polar residues.

Belongs to the SspO family.

Its subcellular location is the spore core. The chain is Small, acid-soluble spore protein O from Bacillus cereus (strain B4264).